The chain runs to 128 residues: Protein SOB FIVE-LIKE 3 (128 aa).

Disordered regions lie at residues 1-26 (MERE…EEEE) and 54-128 (KDSD…HKKK). Residues 8–18 (SSESGWTTYIS) show a composition bias toward polar residues. Residues 11–16 (SGWTTY) carry the SOFL-A motif. Positions 59-68 (SMASDASSGP) match the SOFL-B motif. Residues 80–104 (REGLALRNGKGESNDVYSHRIDDKN) are compositionally biased toward basic and acidic residues. The Nuclear localization signal motif lies at 111–118 (RKKEKKKS).

This sequence belongs to the SOFL plant protein family. In terms of tissue distribution, expressed in seedlings, roots, flowers and siliques.

Its subcellular location is the cytoplasm. It is found in the nucleus. Involved in cytokinin-mediated development. This chain is Protein SOB FIVE-LIKE 3, found in Arabidopsis thaliana (Mouse-ear cress).